The sequence spans 293 residues: Pyridoxal 5'-phosphate synthase subunit PdxS (293 aa).

Aspartate 23 provides a ligand contact to D-ribose 5-phosphate. Lysine 80 serves as the catalytic Schiff-base intermediate with D-ribose 5-phosphate. Glycine 152 contacts D-ribose 5-phosphate. Arginine 164 contacts D-glyceraldehyde 3-phosphate. Residues glycine 213 and glycine 234 to serine 235 each bind D-ribose 5-phosphate.

The protein belongs to the PdxS/SNZ family. In the presence of PdxT, forms a dodecamer of heterodimers.

It catalyses the reaction aldehydo-D-ribose 5-phosphate + D-glyceraldehyde 3-phosphate + L-glutamine = pyridoxal 5'-phosphate + L-glutamate + phosphate + 3 H2O + H(+). The protein operates within cofactor biosynthesis; pyridoxal 5'-phosphate biosynthesis. Its function is as follows. Catalyzes the formation of pyridoxal 5'-phosphate from ribose 5-phosphate (RBP), glyceraldehyde 3-phosphate (G3P) and ammonia. The ammonia is provided by the PdxT subunit. Can also use ribulose 5-phosphate and dihydroxyacetone phosphate as substrates, resulting from enzyme-catalyzed isomerization of RBP and G3P, respectively. The polypeptide is Pyridoxal 5'-phosphate synthase subunit PdxS (Thermus thermophilus (strain ATCC BAA-163 / DSM 7039 / HB27)).